The following is a 249-amino-acid chain: Putative adhesin RC1281 (249 aa).

The signal sequence occupies residues 1-22 (MKKLLLIAAASTALLTSGLSFA).

Functionally, adheres to biotinylated epithelial (Vero cell) proteins. The chain is Putative adhesin RC1281 from Rickettsia conorii (strain ATCC VR-613 / Malish 7).